Consider the following 459-residue polypeptide: Bifunctional protein GlmU (459 aa).

Positions 1–229 are pyrophosphorylase; the sequence is MTNYAIILAA…FDESLGVNDR (229 aa). Residues 8-11, K22, Q72, and 77-78 each bind UDP-N-acetyl-alpha-D-glucosamine; these read LAAG and GT. D102 provides a ligand contact to Mg(2+). The UDP-N-acetyl-alpha-D-glucosamine site is built by G139, E154, N169, and N227. N227 contacts Mg(2+). The tract at residues 230–250 is linker; that stretch reads VALAKAEKVMRRRINHAHMVN. Residues 251-459 are N-acetyltransferase; sequence GVTLTNPAST…KKKPHHPNNK (209 aa). The UDP-N-acetyl-alpha-D-glucosamine site is built by R332 and K350. H362 acts as the Proton acceptor in catalysis. The UDP-N-acetyl-alpha-D-glucosamine site is built by Y365 and N376. Acetyl-CoA-binding positions include A379, 385-386, S404, A422, and R439; that span reads NY.

In the N-terminal section; belongs to the N-acetylglucosamine-1-phosphate uridyltransferase family. It in the C-terminal section; belongs to the transferase hexapeptide repeat family. Homotrimer. Mg(2+) serves as cofactor.

Its subcellular location is the cytoplasm. The enzyme catalyses alpha-D-glucosamine 1-phosphate + acetyl-CoA = N-acetyl-alpha-D-glucosamine 1-phosphate + CoA + H(+). It catalyses the reaction N-acetyl-alpha-D-glucosamine 1-phosphate + UTP + H(+) = UDP-N-acetyl-alpha-D-glucosamine + diphosphate. It functions in the pathway nucleotide-sugar biosynthesis; UDP-N-acetyl-alpha-D-glucosamine biosynthesis; N-acetyl-alpha-D-glucosamine 1-phosphate from alpha-D-glucosamine 6-phosphate (route II): step 2/2. The protein operates within nucleotide-sugar biosynthesis; UDP-N-acetyl-alpha-D-glucosamine biosynthesis; UDP-N-acetyl-alpha-D-glucosamine from N-acetyl-alpha-D-glucosamine 1-phosphate: step 1/1. Its pathway is bacterial outer membrane biogenesis; LPS lipid A biosynthesis. In terms of biological role, catalyzes the last two sequential reactions in the de novo biosynthetic pathway for UDP-N-acetylglucosamine (UDP-GlcNAc). The C-terminal domain catalyzes the transfer of acetyl group from acetyl coenzyme A to glucosamine-1-phosphate (GlcN-1-P) to produce N-acetylglucosamine-1-phosphate (GlcNAc-1-P), which is converted into UDP-GlcNAc by the transfer of uridine 5-monophosphate (from uridine 5-triphosphate), a reaction catalyzed by the N-terminal domain. The polypeptide is Bifunctional protein GlmU (Streptococcus mutans serotype c (strain ATCC 700610 / UA159)).